The primary structure comprises 39 residues: SDVLELTDDNFESRVSDTGSAGLVEFFAPDATANDVPSP.

This sequence belongs to the protein disulfide isomerase family. In terms of assembly, part of the major histocompatibility complex class I (MHC I) peptide loading complex composed of TAP1, TAP2, B2M, MHC heavy chain, TAPBP, PDIA3, and CALR. Interacts with ERP27 and CANX. Interacts with SERPINA2 and with SERPINA1. Interacts with ATP2A2. In terms of processing, within the major histocompatibility complex class I (MHC I) peptide loading complex forms reversible disulfide-linked heterodimers with TAPBP as part of its protein folding chaperone activity. This is essential to assist the dynamic assembly of the MHC I complex with high affinity antigens in the endoplasmic reticulum. Phosphorylated. As to expression, predominantly expressed in liver. Low in brain, testis and colon. Not detectable in pancreas and skeletal muscle.

The protein resides in the endoplasmic reticulum. Its subcellular location is the endoplasmic reticulum lumen. The protein localises to the melanosome. It catalyses the reaction Catalyzes the rearrangement of -S-S- bonds in proteins.. Its function is as follows. Protein disulfide isomerase that catalyzes the formation, isomerization, and reduction or oxidation of disulfide bonds in client proteins and functions as a protein folding chaperone. Core component of the major histocompatibility complex class I (MHC I) peptide loading complex where it functions as an essential folding chaperone for TAPBP. Through TAPBP, assists the dynamic assembly of the MHC I complex with high affinity antigens in the endoplasmic reticulum. Therefore, plays a crucial role in the presentation of antigens to cytotoxic T cells in adaptive immunity. This chain is Protein disulfide-isomerase A3 (PDIA3), found in Papio hamadryas (Hamadryas baboon).